The following is a 69-amino-acid chain: Cytochrome c oxidase subunit 8A, mitochondrial (69 aa).

Residues 1-25 constitute a mitochondrion transit peptide; it reads MSVLTPLLLRGLAGSARRLPVPRAQ. An SIFI-degron motif is present at residues 2-19; it reads SVLTPLLLRGLAGSARRL. Topologically, residues 26-36 are mitochondrial matrix; that stretch reads IHSKPPREQLG. A helical membrane pass occupies residues 37–60; that stretch reads TMDVAIGITSCFLCFLLPAGWVLS. The Mitochondrial intermembrane portion of the chain corresponds to 61–69; that stretch reads HLESYKKRE.

It belongs to the cytochrome c oxidase VIII family. In terms of assembly, component of the cytochrome c oxidase (complex IV, CIV), a multisubunit enzyme composed of 14 subunits. The complex is composed of a catalytic core of 3 subunits MT-CO1, MT-CO2 and MT-CO3, encoded in the mitochondrial DNA, and 11 supernumerary subunits COX4I, COX5A, COX5B, COX6A, COX6B, COX6C, COX7A, COX7B, COX7C, COX8 and NDUFA4, which are encoded in the nuclear genome. The complex exists as a monomer or a dimer and forms supercomplexes (SCs) in the inner mitochondrial membrane with NADH-ubiquinone oxidoreductase (complex I, CI) and ubiquinol-cytochrome c oxidoreductase (cytochrome b-c1 complex, complex III, CIII), resulting in different assemblies (supercomplex SCI(1)III(2)IV(1) and megacomplex MCI(2)III(2)IV(2)). In terms of processing, in response to mitochondrial stress, the precursor protein is ubiquitinated by the SIFI complex in the cytoplasm before mitochondrial import, leading to its degradation. Within the SIFI complex, UBR4 initiates ubiquitin chain that are further elongated or branched by KCMF1.

The protein localises to the mitochondrion inner membrane. The protein operates within energy metabolism; oxidative phosphorylation. Component of the cytochrome c oxidase, the last enzyme in the mitochondrial electron transport chain which drives oxidative phosphorylation. The respiratory chain contains 3 multisubunit complexes succinate dehydrogenase (complex II, CII), ubiquinol-cytochrome c oxidoreductase (cytochrome b-c1 complex, complex III, CIII) and cytochrome c oxidase (complex IV, CIV), that cooperate to transfer electrons derived from NADH and succinate to molecular oxygen, creating an electrochemical gradient over the inner membrane that drives transmembrane transport and the ATP synthase. Cytochrome c oxidase is the component of the respiratory chain that catalyzes the reduction of oxygen to water. Electrons originating from reduced cytochrome c in the intermembrane space (IMS) are transferred via the dinuclear copper A center (CU(A)) of subunit 2 and heme A of subunit 1 to the active site in subunit 1, a binuclear center (BNC) formed by heme A3 and copper B (CU(B)). The BNC reduces molecular oxygen to 2 water molecules using 4 electrons from cytochrome c in the IMS and 4 protons from the mitochondrial matrix. The chain is Cytochrome c oxidase subunit 8A, mitochondrial (COX8A) from Carlito syrichta (Philippine tarsier).